Reading from the N-terminus, the 497-residue chain is L-arabinose isomerase (497 aa).

Mn(2+) contacts are provided by E306, E331, H348, and H447.

It belongs to the arabinose isomerase family. Mn(2+) is required as a cofactor.

It catalyses the reaction beta-L-arabinopyranose = L-ribulose. It functions in the pathway carbohydrate degradation; L-arabinose degradation via L-ribulose; D-xylulose 5-phosphate from L-arabinose (bacterial route): step 1/3. Functionally, catalyzes the conversion of L-arabinose to L-ribulose. The polypeptide is L-arabinose isomerase (Halalkalibacterium halodurans (strain ATCC BAA-125 / DSM 18197 / FERM 7344 / JCM 9153 / C-125) (Bacillus halodurans)).